The following is a 23-amino-acid chain: Coenzyme PQQ synthesis protein A (23 aa).

The segment at residues 15-19 is a cross-link (pyrroloquinoline quinone (Glu-Tyr)); sequence EVTMY.

Belongs to the PqqA family.

It functions in the pathway cofactor biosynthesis; pyrroloquinoline quinone biosynthesis. Functionally, required for coenzyme pyrroloquinoline quinone (PQQ) biosynthesis. PQQ is probably formed by cross-linking a specific glutamate to a specific tyrosine residue and excising these residues from the peptide. The sequence is that of Coenzyme PQQ synthesis protein A from Ectopseudomonas mendocina (strain ymp) (Pseudomonas mendocina).